The chain runs to 689 residues: FACT complex subunit ssrp1-B (689 aa).

Disordered stretches follow at residues 434–565 (DNKS…KRAT) and 592–689 (KAGA…GESD). Positions 461-477 (EQDDDSDDESTDEDYDL) are enriched in acidic residues. Composition is skewed to basic and acidic residues over residues 478-491 (DKDM…KDSS), 523-532 (IEPKKKESKE), 538-563 (EKKE…EPKR), and 601-628 (SADD…EYKK). The segment at residues 561-627 (PKRATTAYII…RYEAEMKEYK (67 aa)) is a DNA-binding region (HMG box). Polar residues predominate over residues 638 to 650 (GPSTKKSSDQSPG).

It belongs to the SSRP1 family. As to quaternary structure, component of the FACT complex, a stable heterodimer of hmg-3 and spt-16. The FACT complex may also include hmg-4 instead of hmg-3. In terms of tissue distribution, expressed in the germline.

It localises to the nucleus. The protein resides in the chromosome. Its function is as follows. Component of the FACT complex, a general chromatin factor that acts to reorganize nucleosomes. The FACT complex is involved in multiple processes that require DNA as a template such as mRNA elongation, DNA replication and DNA repair. During transcription elongation the FACT complex acts as a histone chaperone that both destabilizes and restores nucleosomal structure. It facilitates the passage of RNA polymerase II and transcription by promoting the dissociation of one histone H2A-H2B dimer from the nucleosome, then subsequently promotes the reestablishment of the nucleosome following the passage of RNA polymerase II. Binds specifically to double-stranded DNA. In embryos, may function redundantly with hmg-4 to promote cell cycle progression and development of the anterior pharynx. In the germline, acts non-redundantly with hmg-4 to play a role in oocyte development. The polypeptide is FACT complex subunit ssrp1-B (Caenorhabditis elegans).